The primary structure comprises 211 residues: Thymidylate kinase (211 aa).

An ATP-binding site is contributed by 12–19 (GIDGSGKS).

It belongs to the thymidylate kinase family.

It carries out the reaction dTMP + ATP = dTDP + ADP. Its function is as follows. Phosphorylation of dTMP to form dTDP in both de novo and salvage pathways of dTTP synthesis. This Ruegeria pomeroyi (strain ATCC 700808 / DSM 15171 / DSS-3) (Silicibacter pomeroyi) protein is Thymidylate kinase.